We begin with the raw amino-acid sequence, 328 residues long: MPASSDKLQPKDQQTIELEQKLAVQSIRVFLQSKTSYDVLPVSYRLIVLDTSLLVKKSLNILLQNNVVSAPLWDAQTSKFAGLLTSSDFINVIQYYFHNPDKFELVDKLQLNGLKDIERAIGIQPYDTRSIHPFRPLYEACVKMIESRSRRIPLIDQDEETQREIVVSVLTQYRILKFVALNCKEIRYLKRPLRELDIISTNNIMSCQMSTPVIDVIQLLTLAGGVSSVPIVDEQGKLVNVYEAVDVLGLIKGGIYNDLSLSVGEALMRRSDDFEGVFTCTENDKLSSILDTVRKSRVHRFFVVDSNGFLTGVLTLSDILKYILFAES.

4 CBS domains span residues 42–103 (VSYR…PDKF), 123–186 (IQPY…CKEI), 199–259 (ISTN…YNDL), and 268–328 (MRRS…FAES). ADP is bound by residues I47, R150, R151, 171 to 174 (TQYR), 227 to 228 (SS), and 297 to 299 (RVH). R150 contacts AMP. Residue R150 coordinates ATP. 227–228 (SS) contacts AMP. 227–228 (SS) is an ATP binding site. ATP is bound by residues R300 and 313–318 (VLTLSD). 315–318 (TLSD) lines the ADP pocket. Residue 315 to 318 (TLSD) coordinates AMP.

Belongs to the 5'-AMP-activated protein kinase gamma subunit family. In terms of assembly, AMPK is a heterotrimer of an alpha catalytic subunit, a beta and a gamma non-catalytic subunits.

It localises to the nucleus. The protein localises to the cytoplasm. In terms of biological role, adenine nucleotides-binding subunit gamma of AMP-activated protein kinase (AMPK), an energy sensor protein kinase that plays a key role in regulating cellular energy metabolism. In response to reduction of intracellular ATP levels, AMPK activates energy-producing pathways and inhibits energy-consuming processes: inhibits protein, carbohydrate and lipid biosynthesis, as well as cell growth and proliferation. AMPK acts via direct phosphorylation of metabolic enzymes, and by longer-term effects via phosphorylation of transcription regulators. Gamma non-catalytic subunit mediates binding to AMP, ADP and ATP, leading to activate or inhibit AMPK: AMP-binding results in allosteric activation of alpha catalytic subunit (SNF1) both by inducing phosphorylation and preventing dephosphorylation of catalytic subunits. The sequence is that of 5'-AMP-activated protein kinase subunit gamma (SNF4) from Kluyveromyces lactis (strain ATCC 8585 / CBS 2359 / DSM 70799 / NBRC 1267 / NRRL Y-1140 / WM37) (Yeast).